Here is a 295-residue protein sequence, read N- to C-terminus: MEPFRNIGIIGRLGSTQVLDTIRRLKKFLIDRHLHVILEDTIAEVLPGHGLQTCSRKIMGEICDLVVVVGGDGSMLGAARALARHKVPVLGINRGSLGFLTDIRPDELEAKVGEVLDGQYIVESRFLLDAQVRRGIDSMGQGDALNDVVLHPGKSTRMIEFELYIDGQFVCSQKADGLIVATPTGSTAYALSAGGPIMHPKLDAIVIVPMYPHMLSSRPIVVDGNSELKIVVSPNMQIYPQVSCDGQNHFTCAPGDTVTISKKPQKLRLIHPIDHNYYEICRTKLGWGSRLGGGD.

Residue D72 is the Proton acceptor of the active site. Residues 72 to 73 (DG), 146 to 147 (ND), R157, K174, D176, 187 to 192 (TAYALS), and Q247 each bind NAD(+).

It belongs to the NAD kinase family. A divalent metal cation is required as a cofactor.

It localises to the cytoplasm. The catalysed reaction is NAD(+) + ATP = ADP + NADP(+) + H(+). Involved in the regulation of the intracellular balance of NAD and NADP, and is a key enzyme in the biosynthesis of NADP. Catalyzes specifically the phosphorylation on 2'-hydroxyl of the adenosine moiety of NAD to yield NADP. The polypeptide is NAD kinase (Pseudomonas aeruginosa (strain LESB58)).